Reading from the N-terminus, the 266-residue chain is UPF0294 protein YafD (266 aa).

Belongs to the UPF0294 family.

It is found in the cytoplasm. The sequence is that of UPF0294 protein YafD from Shigella dysenteriae serotype 1 (strain Sd197).